The primary structure comprises 425 residues: Glucose-6-phosphate 1-dehydrogenase (425 aa).

Residues Arg44 and Lys135 each contribute to the NADP(+) site. His165, Lys169, Glu201, and Asp220 together coordinate substrate. The Proton acceptor role is filled by His225. Lys311 contacts substrate.

It belongs to the glucose-6-phosphate dehydrogenase family.

The enzyme catalyses D-glucose 6-phosphate + NADP(+) = 6-phospho-D-glucono-1,5-lactone + NADPH + H(+). It participates in carbohydrate degradation; pentose phosphate pathway; D-ribulose 5-phosphate from D-glucose 6-phosphate (oxidative stage): step 1/3. Functionally, catalyzes the oxidation of glucose 6-phosphate to 6-phosphogluconolactone. The sequence is that of Glucose-6-phosphate 1-dehydrogenase from Helicobacter pylori (strain J99 / ATCC 700824) (Campylobacter pylori J99).